We begin with the raw amino-acid sequence, 249 residues long: Hydroxyacylglutathione hydrolase (249 aa).

The Zn(2+) site is built by His54, His56, Asp58, His59, His113, Asp138, and His176.

Belongs to the metallo-beta-lactamase superfamily. Glyoxalase II family. In terms of assembly, monomer. The cofactor is Zn(2+).

The enzyme catalyses an S-(2-hydroxyacyl)glutathione + H2O = a 2-hydroxy carboxylate + glutathione + H(+). The protein operates within secondary metabolite metabolism; methylglyoxal degradation; (R)-lactate from methylglyoxal: step 2/2. In terms of biological role, thiolesterase that catalyzes the hydrolysis of S-D-lactoyl-glutathione to form glutathione and D-lactic acid. The protein is Hydroxyacylglutathione hydrolase of Synechococcus sp. (strain CC9605).